Consider the following 115-residue polypeptide: MRFLLKLLSKEKENILLEGFWVLEVRVTTKARENRVVCLEDGILRVRVTEVPEKGKANDAVVALLANFLSIPKSDVTLIAGEASRRKKVLLPRSIKAFLLEQFPSESSSTTGKKS.

The protein belongs to the UPF0235 family.

The protein is UPF0235 protein CTA_0423 of Chlamydia trachomatis serovar A (strain ATCC VR-571B / DSM 19440 / HAR-13).